The primary structure comprises 173 residues: Small ribosomal subunit protein uS5 (173 aa).

Residues 18 to 81 enclose the S5 DRBM domain; the sequence is LREKMIAVNR…EQARRGMFKV (64 aa).

It belongs to the universal ribosomal protein uS5 family. As to quaternary structure, part of the 30S ribosomal subunit. Contacts proteins S4 and S8.

Functionally, with S4 and S12 plays an important role in translational accuracy. Located at the back of the 30S subunit body where it stabilizes the conformation of the head with respect to the body. This chain is Small ribosomal subunit protein uS5, found in Bordetella avium (strain 197N).